Reading from the N-terminus, the 709-residue chain is Cell adhesion molecule CEACAM3 (709 aa).

The N-terminal stretch at 1–34 (MELSSVLPCKRCTPWRGLLLTASLLTCWLLPTTA) is a signal peptide. 5 Ig-like V-type domains span residues 35–142 (QVSI…HVYF), 155–262 (QLSI…QVDT), 275–382 (QLTV…QVNT), 393–500 (LLTI…SVHT), and 509–616 (QLVI…HIYK). Asn73, Asn86, Asn103, Asn110, Asn133, Asn207, Asn224, Asn231, Asn327, Asn344, Asn351, Asn381, Asn462, Asn561, Asn578, and Asn585 each carry an N-linked (GlcNAc...) asparagine glycan. One can recognise an Ig-like C2-type domain in the interval 631-695 (RVKSSVVLTC…YRCEVSNPVS (65 aa)).

The protein belongs to the immunoglobulin superfamily. CEA family. As to expression, expression detected only in placenta.

Its function is as follows. Possibly involved in cell adhesion. The polypeptide is Cell adhesion molecule CEACAM3 (Rattus norvegicus (Rat)).